The following is a 390-amino-acid chain: MNRIWLFFSVMFVIGTDTFLLSPLLPLLQDQFHVSTDLSGWMVSAYALGYALFAFIAGPISDRLNRKTVMLWGLAGFIVSTFLCGIAPSFAAMCLFRFAAGVSAAFVTPQIWASIPVIVQPSQIIKGMGIATAGLAASQMLGLPIGGFLASFTWHTPFFVLSACSLILLLILAAVMPGIRPSEPLARPSIVNPYRELFSLPKTSVILLAYFLFQTGNFASFSFLGTWLSADYHLTVSQIGAAMLVLGLGNMLGSLIGSRVSEKLGMFKTLISGMLLMGALYFALPFFPNLFLVEAGFFLTFFTAGIIFPLMMGVFQSIAPNARGTIASLSNAAMYAGTTVGTSIAGFLYQSTQHFGAVTGFTAILFILSMTLYQTISKTGKRQSTARAQL.

12 helical membrane-spanning segments follow: residues 4 to 24, 40 to 60, 68 to 88, 98 to 118, 130 to 150, 159 to 179, 205 to 225, 236 to 256, 273 to 293, 295 to 315, 329 to 349, and 356 to 376; these read IWLF…LSPL, GWMV…AGPI, TVML…GIAP, FAAG…IPVI, IATA…GFLA, FVLS…MPGI, VILL…SFLG, VSQI…GSLI, GMLL…LFLV, AGFF…MGVF, LSNA…GFLY, and GAVT…YQTI.

The protein belongs to the major facilitator superfamily.

It localises to the cell membrane. This is an uncharacterized protein from Bacillus subtilis (strain 168).